The primary structure comprises 244 residues: Ubiquinone/menaquinone biosynthesis C-methyltransferase UbiE (244 aa).

S-adenosyl-L-methionine-binding positions include threonine 70, aspartate 91, and 117-118 (DA).

It belongs to the class I-like SAM-binding methyltransferase superfamily. MenG/UbiE family.

The enzyme catalyses a 2-demethylmenaquinol + S-adenosyl-L-methionine = a menaquinol + S-adenosyl-L-homocysteine + H(+). It catalyses the reaction a 2-methoxy-6-(all-trans-polyprenyl)benzene-1,4-diol + S-adenosyl-L-methionine = a 5-methoxy-2-methyl-3-(all-trans-polyprenyl)benzene-1,4-diol + S-adenosyl-L-homocysteine + H(+). Its pathway is quinol/quinone metabolism; menaquinone biosynthesis; menaquinol from 1,4-dihydroxy-2-naphthoate: step 2/2. The protein operates within cofactor biosynthesis; ubiquinone biosynthesis. Functionally, methyltransferase required for the conversion of demethylmenaquinol (DMKH2) to menaquinol (MKH2) and the conversion of 2-polyprenyl-6-methoxy-1,4-benzoquinol (DDMQH2) to 2-polyprenyl-3-methyl-6-methoxy-1,4-benzoquinol (DMQH2). This is Ubiquinone/menaquinone biosynthesis C-methyltransferase UbiE from Nitrosospira multiformis (strain ATCC 25196 / NCIMB 11849 / C 71).